We begin with the raw amino-acid sequence, 69 residues long: MNKDQASGNWKQFKGKAKEQWGKLTDDDLTVIEGKRDQLVGRIQERYGYEKEAAEKEVKHWEDHHKYHW.

The protein belongs to the UPF0337 (CsbD) family.

The chain is UPF0337 protein ECA0631 from Pectobacterium atrosepticum (strain SCRI 1043 / ATCC BAA-672) (Erwinia carotovora subsp. atroseptica).